The following is a 205-amino-acid chain: MEPKSTTPPPPPPPPVLGAPVPYPPAGAYPPPVGPYAHAPPLYAPPPPAAAAASAAATAASQQAAAAQLQNFWAEQYREIEHTTDFKNHNLPLARIKKIMKADEDVRMIAAEAPVVFARACEMFILELTHRGWAHAEENKRRTLQKSDIAAAIARTEVFDFLVDIVPRDEAKDAEAAAAVAAGIPHPAAGLPATDPMAYYYVQPQ.

Positions 1–24 (MEPKSTTPPPPPPPPVLGAPVPYP) are disordered.

It belongs to the NFYC/HAP5 subunit family. As to quaternary structure, heterotrimeric transcription factor composed of three components, NF-YA, NF-YB and NF-YC. NF-YB and NF-YC must interact and dimerize for NF-YA association and DNA binding. Interacts with NFYB2. Interacts with NFYB8, NFYB10 and HD5/NFYB11.

The protein localises to the nucleus. The protein resides in the cytoplasm. Its function is as follows. Component of the NF-Y/HAP transcription factor complex. The sequence is that of Nuclear transcription factor Y subunit C-6 from Oryza sativa subsp. japonica (Rice).